Here is a 419-residue protein sequence, read N- to C-terminus: UDP-N-acetylglucosamine 1-carboxyvinyltransferase 2 (419 aa).

22–23 (KN) is a phosphoenolpyruvate binding site. Arg-92 is a binding site for UDP-N-acetyl-alpha-D-glucosamine. Residue Cys-116 is the Proton donor of the active site. Cys-116 is subject to 2-(S-cysteinyl)pyruvic acid O-phosphothioketal. UDP-N-acetyl-alpha-D-glucosamine contacts are provided by residues 121–125 (RPIDL), Asp-306, and Ile-328.

The protein belongs to the EPSP synthase family. MurA subfamily.

The protein localises to the cytoplasm. It carries out the reaction phosphoenolpyruvate + UDP-N-acetyl-alpha-D-glucosamine = UDP-N-acetyl-3-O-(1-carboxyvinyl)-alpha-D-glucosamine + phosphate. Its pathway is cell wall biogenesis; peptidoglycan biosynthesis. Functionally, cell wall formation. Adds enolpyruvyl to UDP-N-acetylglucosamine. This Streptococcus pyogenes serotype M18 (strain MGAS8232) protein is UDP-N-acetylglucosamine 1-carboxyvinyltransferase 2.